The chain runs to 409 residues: WW domain-containing oxidoreductase (409 aa).

A disordered region spans residues M1–D23. WW domains lie at D11–T44 and G52–L86. Position 128 to 134 (G128 to G134) interacts with NADP(+). S257 contributes to the substrate binding site. The active-site Proton acceptor is the Y288.

The protein belongs to the short-chain dehydrogenases/reductases (SDR) family.

The protein localises to the cytoplasm. It localises to the mitochondrion. The protein resides in the golgi apparatus. It is found in the lysosome. Putative oxidoreductase. May control genotoxic stress-induced cell death. May play a role in TGFB1 signaling and TGFB1-mediated cell death. May also play a role in tumor necrosis factor (TNF)-mediated cell death. May play a role in Wnt signaling. The chain is WW domain-containing oxidoreductase (Wwox) from Drosophila melanogaster (Fruit fly).